The chain runs to 598 residues: Aspartate--tRNA(Asp/Asn) ligase (598 aa).

Glutamate 174 contacts L-aspartate. Positions 198-201 (QQLK) are aspartate. L-aspartate is bound at residue arginine 220. ATP contacts are provided by residues 220 to 222 (RDE) and glutamine 229. Histidine 458 contributes to the L-aspartate binding site. Glutamate 492 is an ATP binding site. Arginine 499 is an L-aspartate binding site. An ATP-binding site is contributed by 544-547 (GIDR).

It belongs to the class-II aminoacyl-tRNA synthetase family. Type 1 subfamily. Homodimer.

It localises to the cytoplasm. The enzyme catalyses tRNA(Asx) + L-aspartate + ATP = L-aspartyl-tRNA(Asx) + AMP + diphosphate. Functionally, aspartyl-tRNA synthetase with relaxed tRNA specificity since it is able to aspartylate not only its cognate tRNA(Asp) but also tRNA(Asn). Reaction proceeds in two steps: L-aspartate is first activated by ATP to form Asp-AMP and then transferred to the acceptor end of tRNA(Asp/Asn). The sequence is that of Aspartate--tRNA(Asp/Asn) ligase from Dehalococcoides mccartyi (strain ATCC BAA-2100 / JCM 16839 / KCTC 5957 / BAV1).